The chain runs to 713 residues: MDLLGDQHFAAQQPPLFDATPSSLKEDAEELIAETIAAWDSIVSQIQTENATFLTFYSSTSPSKDLRDASTAVGRLFNDAEIELYSRQDMFERVDQVLQQQDKQVVASLDEESLYYIQKLHRRFHQNGCGIAEEGQRVTFKTKMKRLGHLVQQCNKNLNEDKSGVWLGLDELDGIPQSLISRLKQGDGENSDHLWLPTKVPFSSPAITNAKSEATRKRIYCAIQNRMEMNVPLFREIVLLRDETARLLGYADHATLKTADKMMQTPQAVEALLSEIRTAVAPLAAQDVEELLEIKRNEAESRGTTADELYFWDLAYYSARRGEAEKKISSSISEYFELNTTLAKLLSIIEHLFGTRFRRVNAAGRDEAAGSLIWHKDVQMYSVWNVDGPKEFLGTLFSATGEPPRPPTPPQSLVIPTALQGYENTDGSLFLASSALVMNYVRPTDTRPTLLSLDEVRKLFHEIGHLLHSQWTQTKYAALHHVDRDFVEAPSMMLEQFFWVEQHIKDVSFHYSHINSKMKDMWKATLVDQDETNPPEKPAQLSDDVVFNLARANQSKAIQGQLKEVFFATYDMLVHKPASRAALEALNLTELFNKTRSDVYKVRGGEALGEGWEWGHGQTVFRNILNRYDAGYYSYLLGRVFAMDIFDAGFKEKTTSREAGRRYRDMVYRVGGRQAEMKTMTDYLGHEPSTHPYLAWLQGTRIGDSGPTVAVPT.

His-461 provides a ligand contact to Zn(2+). Residue Glu-462 is part of the active site. Zn(2+) is bound by residues His-465 and His-468.

Belongs to the peptidase M3 family. In terms of assembly, monomer. Requires Zn(2+) as cofactor.

It functions in the pathway mycotoxin biosynthesis. Functionally, oligopeptidase; part of the gene cluster that mediates the biosynthesis of the phomopsins, a group of hexapeptide mycotoxins which infects lupins and causes lupinosis disease in livestock. Within the pathway, phomG and phomG' are probably involved in the processing of the phomA and phomA' precursors. The pathway starts with the processing of the precursor phomA by several endopeptidases including kexin proteases as well as the cluster-specific S41 family peptidase phomP1 and the oligopeptidase phomG to produce 10 identical copies of the hexapeptide Tyr-Val-Ile-Pro-Ile-Asp. After being excised from the precursor peptide, the core peptides are cyclized and modified post-translationally by enzymes encoded within the gene cluster. The timing and order of proteolysis of the phomA precursor and PTMs are still unknown. Two tyrosinase-like enzymes, phomQ1 and phomQ2, catalyze the chlorination and hydroxylation of Tyr, respectively. PhomYb, is proposed to be involved in the construction of the macrocyclic structure. The other 4 ustYa family proteins may be involved in PTMs that generate the unique structure of phomopsin A. PhomYa is required for the hydroxylation of C-beta of Tyr. PhomYc, phomYd, and phomYe are responsible for the biosynthesis of 2,3-dehydroisoleucine (dIle), 2,3-dehydroaspartic acid (dAsp), and 3,4-dehydroproline (dPro), respectively. While dIle formation by phomYc is indispensable for the installation of dAsp by phomYd, the order of the other PTMs have not been elucidated yet. Most of the biosynthetic enzymes likely have broad substrate specificity, and thus, there might be a metabolic grid from a precursor to phomopsin A. The enzyme(s) responsible for the biosynthesis of 3,4-dehydrovaline (dVal) have also not been identified yet. Finally, phomM acts as an S-adenosylmethionine-dependent alpha-N-methyltransferase that catalyzes two successive N-methylation reactions, converting N-desmethyl-phomopsin A to phomopsin A and phomopsin A further to an N,N-dimethylated congener called phomopsin E. The polypeptide is Oligopeptidase PhomG (Diaporthe leptostromiformis (Lupinosis disease fungus)).